Reading from the N-terminus, the 488-residue chain is Alpha,alpha-trehalose-phosphate synthase [UDP-forming] 56 kDa subunit (488 aa).

Y102 and D156 together coordinate D-glucose 6-phosphate. Residues R293 and K298 each coordinate UDP. The UDP-alpha-D-glucose site is built by R293 and K298. Position 331 (R331) interacts with D-glucose 6-phosphate. UDP contacts are provided by residues I370 and 396 to 400; that span reads LVSYE. UDP-alpha-D-glucose-binding positions include I370 and 392-400; that span reads DGMNLVSYE.

The protein belongs to the glycosyltransferase 20 family. As to quaternary structure, trehalose synthase/phosphatase complex contains three or four polypeptides of 56 kDa (TPS1), 102 kDa (TPS2), 115 kDa (TPS3) and 123 kDa (TSL1).

It catalyses the reaction D-glucose 6-phosphate + UDP-alpha-D-glucose = alpha,alpha-trehalose 6-phosphate + UDP + H(+). Its pathway is carbohydrate biosynthesis. Synthase catalytic subunit of the trehalose synthase complex that catalyzes the production of trehalose from glucose-6-phosphate and UDP-alpha-D-glucose in a two step process. Can function independently of the complex. This is Alpha,alpha-trehalose-phosphate synthase [UDP-forming] 56 kDa subunit from Kluyveromyces lactis (strain ATCC 8585 / CBS 2359 / DSM 70799 / NBRC 1267 / NRRL Y-1140 / WM37) (Yeast).